The chain runs to 865 residues: Nicotinate catabolism cluster-specific transcription factor (865 aa).

2 consecutive C2H2-type zinc fingers follow at residues 8 to 32 and 41 to 63; these read HACT…SLNH and YTCQ…LDRH. The disordered stretch occupies residues 74–168; it reads GKGVLETRKR…SIDDDGTDPD (95 aa). The Nuclear localization signal(NLS) motif lies at 77 to 87; that stretch reads VLETRKRMRRA. Residues 78–89 are compositionally biased toward basic and acidic residues; it reads LETRKRMRRAED. Basic residues predominate over residues 96-105; it reads PPKRPSRHQQ. A compositionally biased stretch (low complexity) spans 108-132; sequence GPPVGAPLSSSGSVSAGSGRSSRSP. A Nuclear export signal (NES) motif is present at residues 285–289; sequence LDIDL.

The protein localises to the nucleus. In terms of biological role, transcription factor that specifically regulates the expression of the hxn gene cluster that mediates the degradation of nicotinate and related metabolites. In Emericella nidulans (strain FGSC A4 / ATCC 38163 / CBS 112.46 / NRRL 194 / M139) (Aspergillus nidulans), this protein is Nicotinate catabolism cluster-specific transcription factor.